A 210-amino-acid chain; its full sequence is Vacuolar protein sorting-associated protein 28 homolog (210 aa).

Residues 1 to 106 (MSSQNANLMR…REGRPITVKD (106 aa)) form the VPS28 N-terminal domain. The region spanning 110–206 (NVLKHIASIV…AYQAFNKALN (97 aa)) is the VPS28 C-terminal domain.

It belongs to the VPS28 family. As to quaternary structure, component of the ESCRT-I complex (endosomal sorting complex required for transport I). As to expression, expressed in embryos.

Its subcellular location is the endosome. Component of the ESCRT-I complex, a regulator of vesicular trafficking process. The chain is Vacuolar protein sorting-associated protein 28 homolog (vps-28) from Caenorhabditis elegans.